We begin with the raw amino-acid sequence, 384 residues long: Interstitial collagenase (384 aa).

Residues 1-25 (MLSGLWSSILALLGVFLQSVGEFRA) form the signal peptide. A propeptide spans 26-88 (ETQEQDVEIV…STCGVPDVGE (63 aa)) (activation peptide). A Cysteine switch motif is present at residues 79–86 (STCGVPDV). Cys81 lines the Zn(2+) pocket. Ca(2+)-binding residues include Asp113 and Asp129. Residues His139 and Asp141 each contribute to the Zn(2+) site. Asp146, Gly147, Gly149, and Asn151 together coordinate Ca(2+). Residue His154 coordinates Zn(2+). Residues Gly161, Gly163, and Asp165 each coordinate Ca(2+). His167 serves as a coordination point for Zn(2+). Asp169, Glu170, and Glu172 together coordinate Ca(2+). His189 is a binding site for Zn(2+). Residue Glu190 is part of the active site. Zn(2+) is bound by residues His193 and His199. Positions 218 to 239 (LSQDDIDGPSGNPVQPRGPQTP) are disordered. A disulfide bond links Cys242 and Cys381. Residues Asp249, Gln277, and Asp347 each coordinate Ca(2+). 2 Hemopexin repeats span residues 273-319 (ELGL…FGFP) and 333-381 (KQSM…WFNC).

It belongs to the peptidase M10A family. The cofactor is Ca(2+). It depends on Zn(2+) as a cofactor.

Its subcellular location is the secreted. It is found in the extracellular space. The protein localises to the extracellular matrix. The enzyme catalyses Cleavage of the triple helix of collagen at about three-quarters of the length of the molecule from the N-terminus, at 775-Gly-|-Ile-776 in the alpha1(I) chain. Cleaves synthetic substrates and alpha-macroglobulins at bonds where P1' is a hydrophobic residue.. With respect to regulation, can be activated without removal of the activation peptide. In terms of biological role, cleaves collagens of types I, II, and III at one site in the helical domain. Also cleaves collagens of types VII and X. This is Interstitial collagenase from Aquarana catesbeiana (American bullfrog).